The chain runs to 596 residues: Probable tripeptidyl-peptidase SED2 (596 aa).

The N-terminal stretch at 1–16 is a signal peptide; the sequence is MRLLKFVCLLASVAAA. Positions 17–203 are cleaved as a propeptide — removed in mature form; that stretch reads KPTPGASHKV…LESMSVEEFA (187 aa). One can recognise a Peptidase S53 domain in the interval 210 to 596; it reads LVTTACLREL…NFQALTKVLP (387 aa). N-linked (GlcNAc...) asparagine glycosylation is present at asparagine 265. Active-site charge relay system residues include glutamate 286 and aspartate 290. N-linked (GlcNAc...) asparagine glycosylation is present at asparagine 403. The Charge relay system role is filled by serine 501. Ca(2+)-binding residues include aspartate 543 and isoleucine 544. An N-linked (GlcNAc...) asparagine glycan is attached at asparagine 572. Ca(2+) is bound by residues glycine 576 and aspartate 578.

Ca(2+) serves as cofactor.

The protein localises to the secreted. The protein resides in the extracellular space. The catalysed reaction is Release of an N-terminal tripeptide from a polypeptide.. Secreted tripeptidyl-peptidase which degrades proteins at acidic pHs and is involved in virulence. This Trichophyton verrucosum (strain HKI 0517) protein is Probable tripeptidyl-peptidase SED2 (SED2).